The chain runs to 340 residues: DNA-directed RNA polymerase subunit alpha (340 aa).

An alpha N-terminal domain (alpha-NTD) region spans residues 1–236 (MLSLSKNWNT…EQLQLFISFE (236 aa)). The segment at 251-340 (FSPYLLKRVD…LSKRYEDSYN (90 aa)) is alpha C-terminal domain (alpha-CTD).

Belongs to the RNA polymerase alpha chain family. In terms of assembly, homodimer. The RNAP catalytic core consists of 2 alpha, 1 beta, 1 beta' and 1 omega subunit. When a sigma factor is associated with the core the holoenzyme is formed, which can initiate transcription.

It carries out the reaction RNA(n) + a ribonucleoside 5'-triphosphate = RNA(n+1) + diphosphate. Functionally, DNA-dependent RNA polymerase catalyzes the transcription of DNA into RNA using the four ribonucleoside triphosphates as substrates. The protein is DNA-directed RNA polymerase subunit alpha of Rickettsia rickettsii (strain Iowa).